A 967-amino-acid chain; its full sequence is Disks large homolog 1 (967 aa).

Positions 5 to 65 (SSEKAHKAIE…LYEQTLLSER (61 aa)) constitute an L27 domain. In terms of domain architecture, PDZ 1 spans 202 to 289 (NIVLEKGHTG…VVSLSLKRRK (88 aa)). The segment at 324 to 351 (IHSPSAPIHPPPPPPVHHGSLSQLSVGQ) is disordered. Residues 330-339 (PIHPPPPPPV) are compositionally biased toward pro residues. 2 PDZ domains span residues 361–448 (VIDL…QQGT) and 510–591 (PVQL…QYRP). The SH3 domain maps to 619–690 (RKSEYVRALF…PSKKRVEKRE (72 aa)). A disordered region spans residues 673–723 (EETAEGVIPSKKRVEKRERLRRKQVNFNSGSQSLGRNSSTTGLENRRGSRS). Positions 682–696 (SKKRVEKRERLRRKQ) are enriched in basic residues. Residues 697–715 (VNFNSGSQSLGRNSSTTGL) are compositionally biased toward polar residues. One can recognise a Guanylate kinase-like domain in the interval 769 to 955 (VRPVIILGAL…VLSKVYSIIS (187 aa)).

It belongs to the MAGUK family. In terms of assembly, homooligomerizes; requires L27 domain. Interacts (via L27 domain) with ajm-1; the interaction regulates ajm-1 apical junction location. As to expression, expressed in the apical junctions in the hypodermis. Expressed in epithelial cells in the reproductive system including vulva, uterus and spermatheca.

Its subcellular location is the membrane. It localises to the apical cell membrane. The protein localises to the cell junction. It is found in the adherens junction. The protein resides in the lateral cell membrane. Its subcellular location is the cytoplasm. In terms of biological role, essential multidomain scaffolding protein required for normal development. Recruits channels, receptors and signaling molecules to discrete plasma membrane domains in polarized cells. Required for proper embryonic elongation. Acts upstream of ajm-1 and becomes localized to apical junctions independently of ajm-1. With let-413, cooperatively regulates ajm-1 localization to apical junctions and the establishment of newly formed epithelia. Plays a role in assembling the adherens junction by clustering ajm-1 and other proteins, to form electron-dense structures; may form a compartment distinct to that of hmp-1 and associated proteins. Plays a role in the directed outgrowth of seam cells, towards neighboring seam cells, during larval development. This is Disks large homolog 1 from Caenorhabditis elegans.